The sequence spans 529 residues: Phosphoenolpyruvate carboxykinase (ATP) (529 aa).

Arg-52 serves as a coordination point for substrate. Residues Arg-130, Asn-131, and Phe-133 each contribute to the Ca(2+) site. Substrate contacts are provided by Tyr-191 and Lys-197. Residues Lys-197, His-216, and 232-240 (GLSGTGKTT) each bind ATP. Mn(2+)-binding residues include Lys-197 and His-216. Asp-253 lines the Mn(2+) pocket. Position 267 (Gly-267) interacts with Ca(2+). ATP is bound by residues Glu-281, Arg-319, 438–439 (RF), Phe-439, and Thr-444. Arg-319 is a substrate binding site.

The protein belongs to the phosphoenolpyruvate carboxykinase (ATP) family. In terms of assembly, dimer of dimers. Mn(2+) serves as cofactor.

It is found in the cytoplasm. It catalyses the reaction oxaloacetate + ATP = phosphoenolpyruvate + ADP + CO2. Its pathway is carbohydrate biosynthesis; gluconeogenesis. Allosterically activated by calcium. Its function is as follows. Involved in gluconeogenesis. Catalyzes the conversion of oxaloacetate (OAA) to phosphoenolpyruvate (PEP) through direct phosphoryl transfer between the nucleoside triphosphate and OAA. This Thermus thermophilus (strain ATCC 27634 / DSM 579 / HB8) protein is Phosphoenolpyruvate carboxykinase (ATP).